The primary structure comprises 489 residues: MSVYGLQRLYIGGAYVDATSGKTFDTFDPATGELLAQVQQASAADVDRAVASAQQGQREWAALTAMQRSRILRRAVDLLRERNDELAAIETRDTGKPIGETLAVDIVTGADVIEYYAGLATAIEGLQVPLRAESFVYTRREPLGVCAGIGAWNYPIQIACWKTAPALAAGNAMVFKPSEVTPLTALKLAEIYTEAGVPAGVFNVVQGDGSVGALLTGHPDIAKVSFTGGVETGKKVMSLAGASSLKEVTMELGGKSPLIVFDDADLDRAADIAVIANFFSSGQVCTNGTRVFVQRSIKDAFTAKVLERVKRIRVGKPTDADTNFGPLVSAAQLDKVLGFIASGKAEGAKLLAGGTRLTDGHFADGQYVAPTVFGDCRDDMKIVREEIFGPVMSILDFESEDEVIARANDTHYGLAAGVVTENLSRAHRTIHRLEAGICWINTWGESPAEMPVGGYKQSGVGRENGITTLEHYTRIKSVQVELGRYNPVF.

Positions 26 and 93 each coordinate K(+). Position 150 to 152 (150 to 152) interacts with NAD(+); the sequence is GAW. Lys-162 functions as the Charge relay system in the catalytic mechanism. 176–179 provides a ligand contact to NAD(+); it reads KPSE. Val-180 contacts K(+). Position 229–232 (229–232) interacts with NAD(+); that stretch reads GVET. Residue Leu-245 participates in K(+) binding. The active-site Proton acceptor is Glu-251. Gly-253, Cys-285, and Glu-386 together coordinate NAD(+). Catalysis depends on Cys-285, which acts as the Nucleophile. Cys-285 is subject to Cysteine sulfenic acid (-SOH). The K(+) site is built by Lys-456 and Gly-459. Glu-463 (charge relay system) is an active-site residue.

The protein belongs to the aldehyde dehydrogenase family. As to quaternary structure, dimer of dimers. It depends on K(+) as a cofactor.

The enzyme catalyses betaine aldehyde + NAD(+) + H2O = glycine betaine + NADH + 2 H(+). The protein operates within amine and polyamine biosynthesis; betaine biosynthesis via choline pathway; betaine from betaine aldehyde: step 1/1. In terms of biological role, involved in the biosynthesis of the osmoprotectant glycine betaine. Catalyzes the irreversible oxidation of betaine aldehyde to the corresponding acid. The sequence is that of Betaine aldehyde dehydrogenase from Burkholderia vietnamiensis (strain G4 / LMG 22486) (Burkholderia cepacia (strain R1808)).